A 201-amino-acid chain; its full sequence is MKLFYKPGACSLASHITLRESGKDFTLVSVDLMKKRLENGDDYFAVNPKGQVPALLLDDGTLLTEGVAIMQYLADSVPDRQLLAPVNSISRYKTIEWLNYIATELHKGFTPLFRPDTPEEYKPTVRAQLEKKLQYVNEALKDEHWICGQRFTIADAYLFTVLRWAYAVKLNLEGLEHIAAFMQRMAERPEVQDALSAEGLK.

A GST N-terminal domain is found at 1–81 (MKLFYKPGAC…YLADSVPDRQ (81 aa)). Glutathione is bound by residues cysteine 10, lysine 35, valine 52, 65-66 (EG), asparagine 99, and 103-106 (TELH). The 115-residue stretch at 87–201 (NSISRYKTIE…QDALSAEGLK (115 aa)) folds into the GST C-terminal domain.

It belongs to the GST superfamily. Beta family. As to quaternary structure, homodimer.

It is found in the cytoplasm. The catalysed reaction is RX + glutathione = an S-substituted glutathione + a halide anion + H(+). Conjugation of reduced glutathione to a wide number of exogenous and endogenous hydrophobic electrophiles. The protein is Glutathione S-transferase GstA (gstA) of Escherichia coli O157:H7.